A 962-amino-acid chain; its full sequence is Rho GTPase-activating protein syd-1 (962 aa).

3 disordered regions span residues 231 to 367 (GKKS…MRSD), 397 to 419 (PRTL…RIMT), and 437 to 471 (CGEE…NGSP). Composition is skewed to polar residues over residues 243–261 (NATT…SSPR), 323–345 (SFNS…SSTA), 401–412 (RQPNDSNKSNSL), and 453–471 (PPFS…NGSP). The 125-residue stretch at 572–696 (RAAGPGINVD…NDDRVFALNL (125 aa)) folds into the C2 domain. Residues 729 to 923 (VPLGRLVQRE…LDMNQASSSL (195 aa)) form the Rho-GAP domain. Residues 934 to 947 (VNSESGSDSPATSG) show a composition bias toward polar residues. The tract at residues 934-962 (VNSESGSDSPATSGQKGGGGVSYVSESQC) is disordered.

The protein localises to the synapse. Its function is as follows. Probable GTPase activator for the Rho-type GTPases by converting them to an inactive GDP-bound state. Regulates the localization and assembly of presynaptic components during presynaptic development and is required for specifying the identity of axons during initial polarity acquisition. In these roles it is thought to act cell autonomously downstream of syg-1 and syg-2 and upstream of syd-2, possibly as a positive regulator of the latter. Required for the control of movement, egg-laying and the correct localization of elks-1. In Caenorhabditis briggsae, this protein is Rho GTPase-activating protein syd-1.